We begin with the raw amino-acid sequence, 373 residues long: Probable neutral protease 2 homolog MCYG_05201 (373 aa).

Positions 1-19 (MQFFTALAAVGALVAPALA) are cleaved as a signal peptide. A propeptide spanning residues 20–187 (LPTQVPANQS…AHIVGTIDKR (168 aa)) is cleaved from the precursor. 2 disulfides stabilise this stretch: Cys-195–Cys-265 and Cys-272–Cys-290. Residue His-314 coordinates Zn(2+). Glu-315 is a catalytic residue. Positions 318 and 329 each coordinate Zn(2+).

It belongs to the peptidase M35 family. It depends on Zn(2+) as a cofactor.

The protein localises to the secreted. The enzyme catalyses Preferential cleavage of bonds with hydrophobic residues in P1'. Also 3-Asn-|-Gln-4 and 8-Gly-|-Ser-9 bonds in insulin B chain.. Probable secreted metalloprotease that shows high activities on basic nuclear substrates such as histone and protamine. May be involved in virulence. The polypeptide is Probable neutral protease 2 homolog MCYG_05201 (Arthroderma otae (strain ATCC MYA-4605 / CBS 113480) (Microsporum canis)).